Consider the following 309-residue polypeptide: tRNA-cytidine(32) 2-sulfurtransferase (309 aa).

A PP-loop motif motif is present at residues 57 to 62; it reads SGGKDS. [4Fe-4S] cluster is bound by residues Cys-132, Cys-135, and Cys-223.

The protein belongs to the TtcA family. In terms of assembly, homodimer. Mg(2+) serves as cofactor. Requires [4Fe-4S] cluster as cofactor.

Its subcellular location is the cytoplasm. It catalyses the reaction cytidine(32) in tRNA + S-sulfanyl-L-cysteinyl-[cysteine desulfurase] + AH2 + ATP = 2-thiocytidine(32) in tRNA + L-cysteinyl-[cysteine desulfurase] + A + AMP + diphosphate + H(+). The protein operates within tRNA modification. Functionally, catalyzes the ATP-dependent 2-thiolation of cytidine in position 32 of tRNA, to form 2-thiocytidine (s(2)C32). The sulfur atoms are provided by the cysteine/cysteine desulfurase (IscS) system. The polypeptide is tRNA-cytidine(32) 2-sulfurtransferase (Variovorax paradoxus (strain S110)).